Reading from the N-terminus, the 208-residue chain is Ubiquitin-conjugating enzyme E2 S (208 aa).

Positions 14–160 constitute a UBC core domain; that stretch reads QTIRQVMKEL…ARMMTEIHAQ (147 aa). The Glycyl thioester intermediate role is filled by Cys-98. Residues 161 to 193 are disordered; sequence PAKCGAGASDAKDDDGPSTKKHAGLDKKLQDKK. Residues 170-193 are compositionally biased toward basic and acidic residues; sequence DAKDDDGPSTKKHAGLDKKLQDKK.

This sequence belongs to the ubiquitin-conjugating enzyme family.

The catalysed reaction is S-ubiquitinyl-[E1 ubiquitin-activating enzyme]-L-cysteine + [E2 ubiquitin-conjugating enzyme]-L-cysteine = [E1 ubiquitin-activating enzyme]-L-cysteine + S-ubiquitinyl-[E2 ubiquitin-conjugating enzyme]-L-cysteine.. The protein operates within protein modification; protein ubiquitination. Its function is as follows. Catalyzes the covalent attachment of ubiquitin to other proteins. Acts as an essential factor of the anaphase promoting complex/cyclosome (APC/C), a cell cycle-regulated ubiquitin ligase that controls progression through mitosis. Acts by specifically elongating polyubiquitin chains initiated by the E2 enzyme vih/UbcH10 on APC/C substrates, enhancing the degradation of APC/C substrates by the proteasome and promoting mitotic exit. This chain is Ubiquitin-conjugating enzyme E2 S, found in Drosophila virilis (Fruit fly).